Reading from the N-terminus, the 176-residue chain is Translation initiation factor IF-3 (176 aa).

Belongs to the IF-3 family. As to quaternary structure, monomer.

It localises to the cytoplasm. Its function is as follows. IF-3 binds to the 30S ribosomal subunit and shifts the equilibrium between 70S ribosomes and their 50S and 30S subunits in favor of the free subunits, thus enhancing the availability of 30S subunits on which protein synthesis initiation begins. This is Translation initiation factor IF-3 from Streptococcus mutans serotype c (strain ATCC 700610 / UA159).